Reading from the N-terminus, the 1780-residue chain is Protein TIC 214 (1780 aa).

Transmembrane regions (helical) follow at residues 19–39, 68–88, 91–111, 133–153, 176–196, and 227–247; these read IINS…FSIG, FIAG…HLAL, PHTI…WNNN, VFLN…SSML, VGWL…LVWI, and IFSI…PSPI. The disordered stretch occupies residues 251 to 275; sequence KLKGTSETEERGGTKQDQEVSTEEA. The segment covering 254–268 has biased composition (basic and acidic residues); sequence GTSETEERGGTKQDQ.

It belongs to the TIC214 family. As to quaternary structure, part of the Tic complex.

The protein localises to the plastid. It localises to the chloroplast inner membrane. Functionally, involved in protein precursor import into chloroplasts. May be part of an intermediate translocation complex acting as a protein-conducting channel at the inner envelope. The polypeptide is Protein TIC 214 (Draba nemorosa (Woodland whitlowgrass)).